A 541-amino-acid polypeptide reads, in one-letter code: MPRRKQSHPQPVKCEGVKVDTEDSFDEGPGALVLESDLLLGQDLEFEEEEEEEEGDGHNDQLMGFERDSEGDSQGARPGLPYGLSDDESGGGRALSAESEVEEPARGPGEARGERPGPACQLCGGPTGEGPCCGAGGPGGGPPLPPRLLYSCRLCAFVSHYSSHLKRHMQTHSGEKPFRCGRCPYASAQLVNLTRHTRTHTGEKPYRCPHCPFACSSLGNLRRHQRTHTGPPTPPCPTCGFRCCAPRPTRPPSPTEQEGTMPRRSEDALILPDLSLHVPPGGTSFLPDCGQLRGEGEGLCGTGSEPLPELLFPWTCRGCGQELEEGEGSRLGTAMCGRCMRGESGGGGSGGPQGPSDKGFACSLCPFATHYPNHLARHMKTHSGEKPFRCARCPYASAHLDNLKRHQRVHTGEKPYKCPLCPYACGNLANLKRHGRIHSGDKPFRCSLCNYSCNQSMNLKRHMLRHTGEKPFRCATCAYTTGHWDNYKRHQKVHGHGGAGGPGLSAPEGWAPPHSPPSVLSTRGSAALGATGSRALHTDSP.

Positions 1–120 (MPRRKQSHPQ…ARGERPGPAC (120 aa)) are disordered. A compositionally biased stretch (acidic residues) spans 44-55 (LEFEEEEEEEEG). Serine 85 and serine 96 each carry phosphoserine. A compositionally biased stretch (basic and acidic residues) spans 103–115 (EPARGPGEARGER). C2H2-type zinc fingers lie at residues 150–172 (YSCR…MQTH), 178–200 (FRCG…TRTH), 206–228 (YRCP…QRTH), 360–382 (FACS…MKTH), 388–410 (FRCA…QRVH), 416–438 (YKCP…GRIH), 444–466 (FRCS…MLRH), and 472–494 (FRCA…QKVH). Residues 492–541 (KVHGHGGAGGPGLSAPEGWAPPHSPPSVLSTRGSAALGATGSRALHTDSP) form a disordered region.

It belongs to the krueppel C2H2-type zinc-finger protein family. As to quaternary structure, binds DNA. Can associate with the proximal promoter regions of PAX6 and SP4, and their known targets including ARR3, RHO, OPN1MW2 and OPN1SW.

It localises to the nucleus. Functionally, transcriptional regulator that plays a role in retinal development and maintenance. In Rattus norvegicus (Rat), this protein is Zinc finger protein 513 (Znf513).